We begin with the raw amino-acid sequence, 203 residues long: Thymidylate kinase (203 aa).

ATP is bound at residue 10 to 17 (GIDGAGKS).

Belongs to the thymidylate kinase family.

It carries out the reaction dTMP + ATP = dTDP + ADP. Functionally, phosphorylation of dTMP to form dTDP in both de novo and salvage pathways of dTTP synthesis. The sequence is that of Thymidylate kinase from Cupriavidus pinatubonensis (strain JMP 134 / LMG 1197) (Cupriavidus necator (strain JMP 134)).